The primary structure comprises 256 residues: Imidazole glycerol phosphate synthase subunit HisF (256 aa).

Residues Asp12 and Asp131 contribute to the active site.

It belongs to the HisA/HisF family. As to quaternary structure, heterodimer of HisH and HisF.

It is found in the cytoplasm. The catalysed reaction is 5-[(5-phospho-1-deoxy-D-ribulos-1-ylimino)methylamino]-1-(5-phospho-beta-D-ribosyl)imidazole-4-carboxamide + L-glutamine = D-erythro-1-(imidazol-4-yl)glycerol 3-phosphate + 5-amino-1-(5-phospho-beta-D-ribosyl)imidazole-4-carboxamide + L-glutamate + H(+). Its pathway is amino-acid biosynthesis; L-histidine biosynthesis; L-histidine from 5-phospho-alpha-D-ribose 1-diphosphate: step 5/9. Functionally, IGPS catalyzes the conversion of PRFAR and glutamine to IGP, AICAR and glutamate. The HisF subunit catalyzes the cyclization activity that produces IGP and AICAR from PRFAR using the ammonia provided by the HisH subunit. The sequence is that of Imidazole glycerol phosphate synthase subunit HisF from Pseudomonas putida (strain ATCC 700007 / DSM 6899 / JCM 31910 / BCRC 17059 / LMG 24140 / F1).